The chain runs to 699 residues: Polyribonucleotide nucleotidyltransferase (699 aa).

Mg(2+) contacts are provided by Asp484 and Asp490. The region spanning 551–610 is the KH domain; that stretch reads PRITTIQVKPDQVRTVIGPGGKNVRGIIEATGCAIDIEDDGRINIASADGDACKAAIKMI. The region spanning 620–688 is the S1 motif domain; sequence GKLYMATVKK…RQGKIKLSRK (69 aa).

It belongs to the polyribonucleotide nucleotidyltransferase family. Mg(2+) serves as cofactor.

Its subcellular location is the cytoplasm. It carries out the reaction RNA(n+1) + phosphate = RNA(n) + a ribonucleoside 5'-diphosphate. Its function is as follows. Involved in mRNA degradation. Catalyzes the phosphorolysis of single-stranded polyribonucleotides processively in the 3'- to 5'-direction. The polypeptide is Polyribonucleotide nucleotidyltransferase (Syntrophotalea carbinolica (strain DSM 2380 / NBRC 103641 / GraBd1) (Pelobacter carbinolicus)).